The following is a 339-amino-acid chain: Phenylalanine--tRNA ligase alpha subunit (339 aa).

Position 247 (Glu247) interacts with Mg(2+).

It belongs to the class-II aminoacyl-tRNA synthetase family. Phe-tRNA synthetase alpha subunit type 1 subfamily. In terms of assembly, tetramer of two alpha and two beta subunits. The cofactor is Mg(2+).

The protein localises to the cytoplasm. The enzyme catalyses tRNA(Phe) + L-phenylalanine + ATP = L-phenylalanyl-tRNA(Phe) + AMP + diphosphate + H(+). The polypeptide is Phenylalanine--tRNA ligase alpha subunit (Deinococcus geothermalis (strain DSM 11300 / CIP 105573 / AG-3a)).